Consider the following 623-residue polypeptide: Protein skinhead-1 (623 aa).

Disordered stretches follow at residues 1–29 (MGGS…FSSV), 158–184 (TEHP…YEYS), 421–451 (YQST…GSVT), and 467–557 (QRHS…LASD). At Ser-164 the chain carries Phosphoserine; by pmk-1. Polar residues predominate over residues 173-184 (ERPTTSSRYEYS). Ser-430 is modified (phosphoserine; by pmk-1). Low complexity-rich tracts occupy residues 435–449 (GSSG…SPGS), 472–498 (SDCT…ESST), and 511–529 (PSSG…SQSS). The segment at 540-623 (SGQRKRGRQS…DRHDKMSHYI (84 aa)) is basic motif.

It belongs to the bZIP family. Skn1 subfamily. As to quaternary structure, monomer. Interacts with GATA factor elt-3; interaction may enhance transcriptional activation of target genes. Interacts with pgma-5. Interacts with transcription factor mxl-3 (via N-terminus). In terms of processing, cleaved by the aspartic protease ddi-1. As to expression, postembryonic intestinal cells.

The protein localises to the nucleus. It is found in the cytoplasm. Its subcellular location is the mitochondrion. In terms of biological role, transcription factor. Required to specify the fate of ventral blastomeres in the early embryo, and postembryonically for the development of the intestine. Directly regulates expression of zygotically expressed med-1 and med-2 to direct mesendoderm development. In response to oxidative stress and anoxia, required to up-regulate expression of stl-1 mRNA. Involved in regulating innate immunity, acting downstream of the pmk-1 p38/MAPK pathway and probably also downstream of nipi-3. Required for the up-regulation of phase II detoxification genes, including gcs-1 and several glutathione-S-transferase mRNAs in response to oxidative stress generated during pathogenic bacterial infection. Modulates oxidative stress responses in concert with transcription factors such as hcf-1 and elt-3. Regulates the transcription of genes associated with metabolism in response to changes in nutrient availability. In neurons, involved in mitochondrial fusion and behavioral recovery during reoxygenation. Required for riok-1 mRNA expression in the intestine. Downstream of the let-60/Ras, mek-2 and pmk-1 pathway, positively regulates lifespan probably by preventing transcription of insulin-like peptides such as ins-39. Prevents degeneration of dopaminergic CEP neurons in response to high Al(3+) or Mn(2+) levels, probably by promoting the expression of glutathione-S-transferase gst-1. Functionally, directed by the ER-associated degradation pathway (ERAD), mediates proteasomal homeostasis by regulating the expression of proteasomal subunits such as rpt-3 to confer resistance to proteasomal dysfunction. The protein is Protein skinhead-1 (skn-1) of Caenorhabditis elegans.